The chain runs to 137 residues: MKLGTAIPWALLLSTATLVSTARINGPDECGRVIKDTSGSISNTDRQKNLCTWTILMKPDQKVRMAIPYLNLACGKEYVEVFDGLLSGPSYGKLCAGAAIVFLSTANTMTIKYNRISGNSSSPFLIYFYGSSPGSEY.

Residues 1-21 form the signal peptide; that stretch reads MKLGTAIPWALLLSTATLVST. Cystine bridges form between Cys-30-Cys-51 and Cys-74-Cys-95. The 102-residue stretch at 30-131 folds into the CUB domain; that stretch reads CGRVIKDTSG…SPFLIYFYGS (102 aa). Asn-119 is a glycosylation site (N-linked (GlcNAc...) (complex) asparagine).

In terms of assembly, monomer or heterodimer with PSP-I (depending on the type of glycosylation of PSP-I). Seminal plasma or sperm.

It localises to the secreted. The sequence is that of Major seminal plasma glycoprotein PSP-II from Sus scrofa (Pig).